Consider the following 920-residue polypeptide: B3 domain-containing protein REM17 (920 aa).

3 DNA-binding regions (TF-B3) span residues 12-105 (NPHF…LGPS), 153-250 (RFVA…CRAK), and 267-361 (CFEG…LCPT). 3 disordered regions span residues 405–438 (DDDQ…SSFV), 540–562 (LACS…KNTS), and 585–614 (DDDQ…SSDH). A compositionally biased stretch (basic and acidic residues) spans 423 to 432 (NPREKVESSS). Positions 436–531 (SFVGSVNPSS…NKPVLSLCPT (96 aa)) form a DNA-binding region, TF-B3 4. 2 DNA-binding regions (TF-B3) span residues 616–714 (SFVA…SLSE) and 727–823 (YFVG…LCPA). Residues 842–852 (NSLSSNPSSGD) show a composition bias toward low complexity. The tract at residues 842 to 870 (NSLSSNPSSGDDSSRSEESEEENMEDKNI) is disordered.

Its subcellular location is the nucleus. This is B3 domain-containing protein REM17 (REM17) from Arabidopsis thaliana (Mouse-ear cress).